We begin with the raw amino-acid sequence, 360 residues long: Phospho-N-acetylmuramoyl-pentapeptide-transferase (360 aa).

10 helical membrane-spanning segments follow: residues 27–47 (IVSLLTALFISLWMGPHLIAW), 72–92 (PTMGGLMILFSITISVLMWAY), 94–114 (SNPYVWCVLFILIGYGIVGFI), 132–152 (WKYFWQSIIALAAAFTMYSIG), 168–188 (IMPQLGLLYVLLAYFVIVGTS), 199–219 (GLAIMPTVFVAAGFALVAWAT), 236–256 (AGELVIVCTAIVGAGLGFLWF), 263–283 (VFMGDVGSLALGGALGTIAVL), 288–308 (FLLVIMGGVFVVETLSVILQV), and 338–358 (VIVRFWIISLMLVLIGLATLK).

The protein belongs to the glycosyltransferase 4 family. MraY subfamily. Mg(2+) serves as cofactor.

The protein resides in the cell inner membrane. The enzyme catalyses UDP-N-acetyl-alpha-D-muramoyl-L-alanyl-gamma-D-glutamyl-meso-2,6-diaminopimeloyl-D-alanyl-D-alanine + di-trans,octa-cis-undecaprenyl phosphate = di-trans,octa-cis-undecaprenyl diphospho-N-acetyl-alpha-D-muramoyl-L-alanyl-D-glutamyl-meso-2,6-diaminopimeloyl-D-alanyl-D-alanine + UMP. It functions in the pathway cell wall biogenesis; peptidoglycan biosynthesis. Catalyzes the initial step of the lipid cycle reactions in the biosynthesis of the cell wall peptidoglycan: transfers peptidoglycan precursor phospho-MurNAc-pentapeptide from UDP-MurNAc-pentapeptide onto the lipid carrier undecaprenyl phosphate, yielding undecaprenyl-pyrophosphoryl-MurNAc-pentapeptide, known as lipid I. The polypeptide is Phospho-N-acetylmuramoyl-pentapeptide-transferase (Yersinia pestis bv. Antiqua (strain Angola)).